Here is a 240-residue protein sequence, read N- to C-terminus: Epoxyqueuosine reductase QueH (240 aa).

[4Fe-4S] cluster-binding residues include C43, C44, C129, and C132. C211 and C213 are oxidised to a cystine.

Belongs to the QueH family.

The enzyme catalyses epoxyqueuosine(34) in tRNA + AH2 = queuosine(34) in tRNA + A + H2O. It functions in the pathway tRNA modification; tRNA-queuosine biosynthesis. Its function is as follows. Catalyzes the conversion of epoxyqueuosine (oQ) to queuosine (Q), which is a hypermodified base found in the wobble positions of tRNA(Asp), tRNA(Asn), tRNA(His) and tRNA(Tyr). The polypeptide is Epoxyqueuosine reductase QueH (Staphylococcus aureus (strain Mu50 / ATCC 700699)).